We begin with the raw amino-acid sequence, 366 residues long: Chorismate synthase (366 aa).

Positions 48 and 54 each coordinate NADP(+). FMN is bound by residues 132–134, 244–245, glycine 289, 304–308, and arginine 330; these read RSS, NA, and KPTSS.

Belongs to the chorismate synthase family. In terms of assembly, homotetramer. The cofactor is FMNH2.

The enzyme catalyses 5-O-(1-carboxyvinyl)-3-phosphoshikimate = chorismate + phosphate. The protein operates within metabolic intermediate biosynthesis; chorismate biosynthesis; chorismate from D-erythrose 4-phosphate and phosphoenolpyruvate: step 7/7. Catalyzes the anti-1,4-elimination of the C-3 phosphate and the C-6 proR hydrogen from 5-enolpyruvylshikimate-3-phosphate (EPSP) to yield chorismate, which is the branch point compound that serves as the starting substrate for the three terminal pathways of aromatic amino acid biosynthesis. This reaction introduces a second double bond into the aromatic ring system. In Methylobacterium radiotolerans (strain ATCC 27329 / DSM 1819 / JCM 2831 / NBRC 15690 / NCIMB 10815 / 0-1), this protein is Chorismate synthase.